The sequence spans 290 residues: MFKFFRNKLQSLFKKNISLDLIEDAESLFYEADFGTELTEELCARLRRTKKADASTIKDLITVLLRESLEGLPSQASQSSQTRPIVSLLLGTNGSGKTTTAAKLAHYYKERSESVMLVATDTFRAAGMDQARLWANELGCGFVSGQPGGDAAAIAFDGIQSAIARGYSRVIIDTSGRLHVHGNLMKELSKIVSVCGKALEGAPHEIFMTVDSTLGNNAIEQVRVFHDVVPLSGLIFTKVDGSAKGGTLFQIAKRLKIPTKFIGYGESLKDLNEFDLDLFLNKLFPEVEKI.

GTP is bound by residues 91 to 98 (GTNGSGKT), 173 to 177 (DTSGR), and 237 to 240 (TKVD).

It belongs to the GTP-binding SRP family. FtsY subfamily. In terms of assembly, part of the signal recognition particle protein translocation system, which is composed of SRP and FtsY.

Its subcellular location is the cell inner membrane. It localises to the cytoplasm. The catalysed reaction is GTP + H2O = GDP + phosphate + H(+). Involved in targeting and insertion of nascent membrane proteins into the cytoplasmic membrane. Acts as a receptor for the complex formed by the signal recognition particle (SRP) and the ribosome-nascent chain (RNC). In Chlamydia pneumoniae (Chlamydophila pneumoniae), this protein is Signal recognition particle receptor FtsY.